A 206-amino-acid chain; its full sequence is Outer-membrane lipoprotein carrier protein (206 aa).

The first 21 residues, 1 to 21 (MKKLLCAVLLSPLLYSNAVLA), serve as a signal peptide directing secretion.

Belongs to the LolA family. As to quaternary structure, monomer.

Its subcellular location is the periplasm. In terms of biological role, participates in the translocation of lipoproteins from the inner membrane to the outer membrane. Only forms a complex with a lipoprotein if the residue after the N-terminal Cys is not an aspartate (The Asp acts as a targeting signal to indicate that the lipoprotein should stay in the inner membrane). The polypeptide is Outer-membrane lipoprotein carrier protein (Shewanella sp. (strain MR-7)).